The primary structure comprises 196 residues: Pyridoxal 5'-phosphate synthase subunit PdxT (196 aa).

47–49 provides a ligand contact to L-glutamine; that stretch reads GES. Cys79 (nucleophile) is an active-site residue. Residues Arg106 and 134-135 each bind L-glutamine; that span reads IR. Active-site charge relay system residues include His170 and Glu172.

It belongs to the glutaminase PdxT/SNO family. In terms of assembly, in the presence of PdxS, forms a dodecamer of heterodimers. Only shows activity in the heterodimer.

It carries out the reaction aldehydo-D-ribose 5-phosphate + D-glyceraldehyde 3-phosphate + L-glutamine = pyridoxal 5'-phosphate + L-glutamate + phosphate + 3 H2O + H(+). The enzyme catalyses L-glutamine + H2O = L-glutamate + NH4(+). It functions in the pathway cofactor biosynthesis; pyridoxal 5'-phosphate biosynthesis. Its function is as follows. Catalyzes the hydrolysis of glutamine to glutamate and ammonia as part of the biosynthesis of pyridoxal 5'-phosphate. The resulting ammonia molecule is channeled to the active site of PdxS. This Bacillus velezensis (strain DSM 23117 / BGSC 10A6 / LMG 26770 / FZB42) (Bacillus amyloliquefaciens subsp. plantarum) protein is Pyridoxal 5'-phosphate synthase subunit PdxT.